A 165-amino-acid chain; its full sequence is Austinoid biosynthesis cluster protein J (165 aa).

Belongs to the trt14 isomerase family. In terms of assembly, homodimer.

It participates in secondary metabolite biosynthesis; terpenoid biosynthesis. Its function is as follows. Part of the gene cluster that mediates the biosynthesis of calidodehydroaustin, a fungal meroterpenoid. The first step of the pathway is the synthesis of 3,5-dimethylorsellinic acid by the polyketide synthase ausA. 3,5-dimethylorsellinic acid is then prenylated by the polyprenyl transferase ausN. Further epoxidation by the FAD-dependent monooxygenase ausM and cyclization by the probable terpene cyclase ausL lead to the formation of protoaustinoid A. Protoaustinoid A is then oxidized to spiro-lactone preaustinoid A3 by the combined action of the FAD-binding monooxygenases ausB and ausC, and the dioxygenase ausE. Acid-catalyzed keto-rearrangement and ring contraction of the tetraketide portion of preaustinoid A3 by ausJ lead to the formation of preaustinoid A4. The aldo-keto reductase ausK, with the help of ausH, is involved in the next step by transforming preaustinoid A4 into isoaustinone which is in turn hydroxylated by the P450 monooxygenase ausI to form austinolide. The cytochrome P450 monooxygenase ausG modifies austinolide to austinol. Austinol is further acetylated to austin by the O-acetyltransferase ausP, which spontaneously changes to dehydroaustin. The cytochrome P450 monooxygenase ausR then converts dehydroaustin is into 7-dehydrodehydroaustin. The hydroxylation catalyzed by ausR permits the O-acetyltransferase ausQ to add an additional acetyl group to the molecule, leading to the formation of acetoxydehydroaustin. The short chain dehydrogenase ausT catalyzes the reduction of the double bond present between carbon atoms 1 and 2 to convert 7-dehydrodehydroaustin into 1,2-dihydro-7-hydroxydehydroaustin. AusQ catalyzes not only an acetylation reaction but also the addition of the PKS ausV diketide product to 1,2-dihydro-7-hydroxydehydroaustin, forming precalidodehydroaustin. Finally, the iron/alpha-ketoglutarate-dependent dioxygenase converts precalidodehydroaustin into calidodehydroaustin. This chain is Austinoid biosynthesis cluster protein J, found in Aspergillus calidoustus.